A 37-amino-acid polypeptide reads, in one-letter code: uncharacterized protein (37 aa).

This is an uncharacterized protein from Archaeoglobus fulgidus (strain ATCC 49558 / DSM 4304 / JCM 9628 / NBRC 100126 / VC-16).